A 435-amino-acid polypeptide reads, in one-letter code: Serine hydroxymethyltransferase (435 aa).

(6S)-5,6,7,8-tetrahydrofolate-binding positions include Leu131 and 135-137 (GHL). N6-(pyridoxal phosphate)lysine is present on Lys240.

Belongs to the SHMT family. As to quaternary structure, homodimer. Requires pyridoxal 5'-phosphate as cofactor.

The protein resides in the cytoplasm. It catalyses the reaction (6R)-5,10-methylene-5,6,7,8-tetrahydrofolate + glycine + H2O = (6S)-5,6,7,8-tetrahydrofolate + L-serine. It functions in the pathway one-carbon metabolism; tetrahydrofolate interconversion. Its pathway is amino-acid biosynthesis; glycine biosynthesis; glycine from L-serine: step 1/1. Catalyzes the reversible interconversion of serine and glycine with tetrahydrofolate (THF) serving as the one-carbon carrier. This reaction serves as the major source of one-carbon groups required for the biosynthesis of purines, thymidylate, methionine, and other important biomolecules. Also exhibits THF-independent aldolase activity toward beta-hydroxyamino acids, producing glycine and aldehydes, via a retro-aldol mechanism. This chain is Serine hydroxymethyltransferase, found in Bifidobacterium longum subsp. infantis (strain ATCC 15697 / DSM 20088 / JCM 1222 / NCTC 11817 / S12).